Reading from the N-terminus, the 500-residue chain is Probable E3 ubiquitin-protein ligase ARI16 (500 aa).

Positions 74-288 (NSNSSSADRE…QGNWNCSPVA (215 aa)) are TRIAD supradomain. The segment at 78 to 130 (SSADRETGDGDYLVSTPFCSHKFSTTCWSEYLSDALKKNKEQRGLISCLSQDC) adopts an RING-type 1 zinc-finger fold. Cys-96, His-98, Cys-125, Cys-130, Cys-169, Cys-174, Cys-194, Cys-196, Cys-201, Cys-204, His-209, Cys-214, Cys-241, Cys-244, Cys-261, Cys-263, Cys-268, Cys-271, His-278, and Cys-284 together coordinate Zn(2+). The segment at 148-214 (EMYENYILES…GLESHRPVSC (67 aa)) adopts an IBR-type zinc-finger fold. The RING-type 2; atypical zinc finger occupies 241 to 271 (CPKCKIPVQQNGDPNYRLINCICSNNFCWIC). The segment at 453-483 (EPGSRWFCDRCTFENSWVDKQCKMCFFPLDY) adopts a RanBP2-type zinc-finger fold.

The protein belongs to the RBR family. Ariadne subfamily. The cofactor is Zn(2+). Preferentially expressed in green siliques.

The catalysed reaction is [E2 ubiquitin-conjugating enzyme]-S-ubiquitinyl-L-cysteine + [acceptor protein]-L-lysine = [E2 ubiquitin-conjugating enzyme]-L-cysteine + [acceptor protein]-N(6)-ubiquitinyl-L-lysine.. Its pathway is protein modification; protein ubiquitination. Its function is as follows. Might act as an E3 ubiquitin-protein ligase, or as part of E3 complex, which accepts ubiquitin from specific E2 ubiquitin-conjugating enzymes and then transfers it to substrates. The protein is Probable E3 ubiquitin-protein ligase ARI16 (ARI16) of Arabidopsis thaliana (Mouse-ear cress).